Consider the following 1992-residue polypeptide: Otoferlin (1992 aa).

3 consecutive C2 domains span residues 1–98 (MALV…EVSD), 241–362 (KRSK…HKWA), and 405–536 (IEGN…FLPT). At 1-1958 (MALVVHLKTV…IRYFIWHNYR (1958 aa)) the chain is on the cytoplasmic side. Positions 655–699 (PALAKKKKEGGGESEEEESELIHNSSEEEAEDDGDLTSVPSTPPM) are disordered. C2 domains are found at residues 952–1077 (IQAV…PPRF) and 1124–1250 (RGPI…NNWA). Ca(2+) contacts are provided by Asp984, Asp990, Asp1046, and Asp1048. Positions 1282 to 1363 (VKVDLNEDEK…ESAEIKADDF (82 aa)) form a coiled coil. Disordered regions lie at residues 1288–1311 (EDEK…EEEP) and 1354–1399 (ESAE…KPKV). Over residues 1356–1399 (AEIKADDFPMKGTKPKEKSKDKKSTKDKKKNNDGTEKRPPKPKV) the composition is skewed to basic and acidic residues. C2 domains are found at residues 1470–1588 (DPNM…ATCG) and 1711–1860 (PAPG…KQCS). 8 residues coordinate Ca(2+): Asp1503, Asp1509, Asp1558, Asp1560, Asp1566, Asp1831, Ser1834, and Asp1837. A helical membrane pass occupies residues 1959–1979 (WLILKALALLLLLLLVGLFLY). The Extracellular segment spans residues 1980 to 1992 (SIPGYLVKKLLGA).

Belongs to the ferlin family. The cofactor is Ca(2+).

The protein localises to the cytoplasmic vesicle. It localises to the secretory vesicle. It is found in the synaptic vesicle membrane. The protein resides in the basolateral cell membrane. Its subcellular location is the endoplasmic reticulum membrane. The protein localises to the golgi apparatus membrane. It localises to the presynaptic cell membrane. It is found in the cell membrane. Its function is as follows. Key calcium ion sensor involved in the Ca(2+)-triggered synaptic vesicle-plasma membrane fusion and in the control of neurotransmitter release at these output synapses. The protein is Otoferlin (otof) of Danio rerio (Zebrafish).